We begin with the raw amino-acid sequence, 737 residues long: Serine/threonine-protein kinase dst1 (737 aa).

Residues 29–281 (YHIQERLGKG…AKELLNHEFI (253 aa)) enclose the Protein kinase domain. ATP-binding positions include 35 to 43 (LGKGSFGQV) and Lys58. Asp149 acts as the Proton acceptor in catalysis. Disordered regions lie at residues 305-356 (SMFE…SNNY), 372-475 (KDDA…TTDQ), 491-559 (KPIT…ISNN), and 575-631 (NNNI…ESLS). Composition is skewed to low complexity over residues 334–345 (NNNTVTNYSTVI), 401–410 (SSCSSSSSSS), 425–444 (PITNSPKISPISSNNINKIP), and 454–473 (ATTTTTTTTTTTTTAASTTT). Residues 491–503 (KPITSSNSTSVTP) are compositionally biased toward polar residues. Residues 510 to 525 (SNNTTTTSNINTPIKP) are compositionally biased toward low complexity. 2 stretches are compositionally biased toward polar residues: residues 529 to 554 (LKKSNSNTPVQLKTSGDKTPTTTPLK) and 585 to 596 (SPTTGQKIIKTN). The segment covering 597–615 (SGGVLKSSGGLSSKRSPSS) has biased composition (low complexity).

This sequence belongs to the protein kinase superfamily. STE Ser/Thr protein kinase family. STE20 subfamily. Requires Mg(2+) as cofactor.

The enzyme catalyses L-seryl-[protein] + ATP = O-phospho-L-seryl-[protein] + ADP + H(+). It catalyses the reaction L-threonyl-[protein] + ATP = O-phospho-L-threonyl-[protein] + ADP + H(+). In Dictyostelium discoideum (Social amoeba), this protein is Serine/threonine-protein kinase dst1.